Consider the following 151-residue polypeptide: MFSTKALLLAGLISTALAGPWANICAGKSSNEIRTCDRHGCGQYSAQRSQRPHQGVDILCSAGSTVYAPFTGMIVGQEKPYQNKNAINNGVRISGRGFCVKMFYIKPIKYKGPIKKGEKLGTLLPLQKVYPGIQSHVHIENCDSSDPTAYL.

A signal peptide spans 1 to 18; it reads MFSTKALLLAGLISTALA. Intrachain disulfides connect Cys25–Cys60, Cys36–Cys41, and Cys99–Cys142. Positions 53, 57, and 138 each coordinate Zn(2+).

The protein belongs to the LECT2/MIM-1 family. Interacts with MET. In terms of tissue distribution, highly expressed in adult and fetal liver and weakly in testis. Not expressed in bone marrow.

The protein localises to the cytoplasm. It localises to the secreted. In terms of biological role, has a neutrophil chemotactic activity. Also a positive regulator of chondrocyte proliferation. Does not show metalloendopeptidase activity. The sequence is that of Leukocyte cell-derived chemotaxin-2 (LECT2) from Homo sapiens (Human).